The sequence spans 215 residues: Osmoprotectant import permease protein OsmW (215 aa).

Residues 18–202 form the ABC transmembrane type-1 domain; the sequence is TFQHLWLVAL…LLAIVLDWLL (185 aa). 6 helical membrane-spanning segments follow: residues 24–44, 51–73, 78–100, 132–152, 153–173, and 183–203; these read LVAL…VLIV, TPVL…GLMI, LIGH…LLPI, WVEI…AVVM, NIGV…LLLL, and MLIA…WLLH.

This sequence belongs to the binding-protein-dependent transport system permease family. As to quaternary structure, the complex is composed of two ATP-binding proteins (OsmV), two transmembrane proteins (OsmW and OsmY) and a solute-binding protein (OsmX).

The protein resides in the cell inner membrane. Its function is as follows. Part of the OsmU ABC transporter complex, which is involved in the uptake of osmoprotectants such as choline-O-sulfate and glycine betaine. Probably responsible for the translocation of the substrate across the membrane. The sequence is that of Osmoprotectant import permease protein OsmW (osmW) from Salmonella typhimurium (strain LT2 / SGSC1412 / ATCC 700720).